Here is a 252-residue protein sequence, read N- to C-terminus: 5'-nucleotidase SurE (252 aa).

Aspartate 8, aspartate 9, serine 39, and asparagine 95 together coordinate a divalent metal cation.

The protein belongs to the SurE nucleotidase family. It depends on a divalent metal cation as a cofactor.

Its subcellular location is the cytoplasm. It carries out the reaction a ribonucleoside 5'-phosphate + H2O = a ribonucleoside + phosphate. Functionally, nucleotidase that shows phosphatase activity on nucleoside 5'-monophosphates. This chain is 5'-nucleotidase SurE, found in Clostridium botulinum (strain Loch Maree / Type A3).